The primary structure comprises 260 residues: MSFLHVDHVTHTYFSIKEKTTAVRDIHFDAEKGDFISFLGPSGCGKTTLLSIIAGLIEPSEGRVLIEGREPNQKEHNIGYMLQQDYLFPWKSIEENVLLGLKIADTLTEESKAAALGLLPEFGLIDVEKKYPKELSGGMRQRAALARTLAPNPSLLLLDEPFSALDFQTKLSLENLVFRTLKEYQKTAVLVTHDIGEAIAMSDTIFLFSNQPGTIHQIFTIPKELAAMLPFDARQEPSFQTLFQTIWKELNSLEKQQRNH.

Positions Leu-4 to Phe-231 constitute an ABC transporter domain. Gly-40–Thr-47 is a binding site for ATP.

It belongs to the ABC transporter superfamily.

This is an uncharacterized protein from Bacillus subtilis (strain 168).